The sequence spans 141 residues: MAKKVVGLIKLQLPAGKATPAPPVGPALGQHGVNIMAFCKEYNAKTANQAGFTIPVVITVYQDRSFSFILKTPPAAVLIKKAAGIESGSGVPNKNKVGKITKEQVKEIAQTKMPDLNAASLEAAMSMIAGTARSMGVEVVD.

Belongs to the universal ribosomal protein uL11 family. Part of the ribosomal stalk of the 50S ribosomal subunit. Interacts with L10 and the large rRNA to form the base of the stalk. L10 forms an elongated spine to which L12 dimers bind in a sequential fashion forming a multimeric L10(L12)X complex. Post-translationally, one or more lysine residues are methylated.

Forms part of the ribosomal stalk which helps the ribosome interact with GTP-bound translation factors. In Clostridium acetobutylicum (strain ATCC 824 / DSM 792 / JCM 1419 / IAM 19013 / LMG 5710 / NBRC 13948 / NRRL B-527 / VKM B-1787 / 2291 / W), this protein is Large ribosomal subunit protein uL11.